Reading from the N-terminus, the 504-residue chain is Maturase K (504 aa).

It belongs to the intron maturase 2 family. MatK subfamily.

Its subcellular location is the plastid. The protein resides in the chloroplast. Functionally, usually encoded in the trnK tRNA gene intron. Probably assists in splicing its own and other chloroplast group II introns. The sequence is that of Maturase K from Amaranthus caudatus (Love-lies-bleeding).